A 173-amino-acid chain; its full sequence is Ribosome maturation factor RimP (173 aa).

Belongs to the RimP family.

Its subcellular location is the cytoplasm. In terms of biological role, required for maturation of 30S ribosomal subunits. The protein is Ribosome maturation factor RimP of Chlorobium phaeobacteroides (strain DSM 266 / SMG 266 / 2430).